Reading from the N-terminus, the 900-residue chain is Translation initiation factor IF-2 (900 aa).

Basic and acidic residues-rich tracts occupy residues 119-158 (AAKA…EKQE), 165-191 (ADEK…KADA), and 198-229 (EEAR…DHHV). Residues 119 to 306 (AAKAEAEAKA…NARSVAPESM (188 aa)) form a disordered region. The span at 257–272 (SANAGNNANSNSNAGS) shows a compositional bias: low complexity. The tr-type G domain occupies 400–569 (PRAPVVTIMG…LLESEVLELK (170 aa)). Residues 409–416 (GHVDHGKT) form a G1 region. 409-416 (GHVDHGKT) contacts GTP. Residues 434-438 (GITQH) form a G2 region. The tract at residues 455-458 (DTPG) is G3. GTP contacts are provided by residues 455–459 (DTPGH) and 509–512 (NKID). A G4 region spans residues 509–512 (NKID). A G5 region spans residues 545–547 (SAK).

The protein belongs to the TRAFAC class translation factor GTPase superfamily. Classic translation factor GTPase family. IF-2 subfamily.

Its subcellular location is the cytoplasm. Its function is as follows. One of the essential components for the initiation of protein synthesis. Protects formylmethionyl-tRNA from spontaneous hydrolysis and promotes its binding to the 30S ribosomal subunits. Also involved in the hydrolysis of GTP during the formation of the 70S ribosomal complex. The chain is Translation initiation factor IF-2 from Shewanella piezotolerans (strain WP3 / JCM 13877).